The primary structure comprises 953 residues: Leucine-rich repeat receptor protein kinase HPCA1 (953 aa).

Residues 1-23 (MSSRTGASLLLILFFFQICSVSA) form the signal peptide. Residues 24-558 (LTNGLDASAL…EVSSKSSNKS (535 aa)) lie on the Extracellular side of the membrane. LRR repeat units lie at residues 64–88 (NDRV…ISFL), 89–113 (SELR…IGNL), 115–137 (KLRN…IGTL), 138–162 (KELI…GLLS), 164–187 (LYWF…TSAP), and 192–216 (LLQT…LFSS). The N-linked (GlcNAc...) asparagine glycan is linked to Asn-182. N-linked (GlcNAc...) asparagine glycosylation occurs at Asn-217. 7 LRR repeats span residues 218-241 (MSLI…LSLV), 242-265 (KTLT…LNNL), 266-290 (TNLN…SLTS), 292-311 (YTLD…SWIS), 313-337 (LPSL…FFSP), 339-361 (QLQT…TDVS), and 362-384 (SQLE…ANKV). N-linked (GlcNAc...) asparagine glycans are attached at residues Asn-264, Asn-284, and Asn-298. N-linked (GlcNAc...) asparagine glycosylation is present at Asn-411. Intrachain disulfides connect Cys-421/Cys-424 and Cys-434/Cys-436. Asn-456, Asn-459, Asn-510, and Asn-523 each carry an N-linked (GlcNAc...) asparagine glycan. Residues 559–579 (ILIGAVVGVVVLLLLLTIAGI) form a helical membrane-spanning segment. The Cytoplasmic segment spans residues 580 to 953 (YALRQKKRAE…NFPASKLEPQ (374 aa)). A phosphoserine mark is found at Ser-606 and Ser-607. The Protein kinase domain occupies 631-905 (FSEANDVGGG…EVVKEIENIM (275 aa)). ATP is bound by residues 637–645 (VGGGGYGKV) and Lys-659. The active-site Proton acceptor is the Asp-755. Phosphothreonine is present on residues Thr-786, Thr-789, and Thr-790. Polar residues predominate over residues 912–921 (PNSDSATSSR). The tract at residues 912–953 (PNSDSATSSRTYEDAIKGSGDPYGSESFQYSGNFPASKLEPQ) is disordered. Phosphoserine is present on Ser-942.

Belongs to the protein kinase superfamily. Ser/Thr protein kinase family. Autophosphorylated at Ser-606, Ser-607, Thr-786, Thr-789, Thr-790 and Ser-942 in response to extracellular hydrogen peroxide. As to expression, widely expressed.

The protein localises to the cell membrane. The catalysed reaction is L-seryl-[protein] + ATP = O-phospho-L-seryl-[protein] + ADP + H(+). It carries out the reaction L-threonyl-[protein] + ATP = O-phospho-L-threonyl-[protein] + ADP + H(+). Activated by autophosphorylation on serine and threonine residues in response to extracellular hydrogen peroxide. Its function is as follows. Leucine-rich repeat receptor protein kinase that acts as sensor of extracellular hydrogen peroxide. Required for intracellular calcium influx in response to extracellular hydrogen peroxide. Mediates hydrogen peroxide-induced activation of calcium channels in guard cells and is required for stomatal closure. This chain is Leucine-rich repeat receptor protein kinase HPCA1, found in Arabidopsis thaliana (Mouse-ear cress).